Reading from the N-terminus, the 213-residue chain is uncharacterized protein (213 aa).

This is an uncharacterized protein from Aquifex aeolicus (strain VF5).